The sequence spans 530 residues: Regulatory protein LuxO (530 aa).

The Sigma-54 factor interaction domain maps to 194-423 (IIGNSGPMLA…LEHVINRAAL (230 aa)). Residues 222–229 (GETGVGKE) and 285–294 (ADGGTLFLDE) contribute to the ATP site.

Its function is as follows. Involved in the regulation of different processes depending on the cell density. Acts together with sigma-54 to repress, perhaps indirectly, some genes. The polypeptide is Regulatory protein LuxO (luxO) (Vibrio cholerae serotype O1 (strain ATCC 39541 / Classical Ogawa 395 / O395)).